The chain runs to 273 residues: Epithelial sodium channel subunit beta (273 aa).

Residues 1 to 245 (NCYIFNWGQE…RSISESPTTN (245 aa)) are Extracellular-facing. 5 disulfide bridges follow: Cys-92–Cys-179, Cys-117–Cys-175, Cys-121–Cys-171, Cys-130–Cys-157, and Cys-132–Cys-146. The helical transmembrane segment at 246 to 273 (VVWLLSNLGGQFGFWMGGSVLCIIEFGE) threads the bilayer.

It belongs to the amiloride-sensitive sodium channel (TC 1.A.6) family. SCNN1B subfamily. In terms of assembly, component of the heterotrimeric epithelial sodium channel (ENaC) composed of an alpha/SCNN1A, a beta/SCNN1B and a gamma/SCNN1G subunit.

Its subcellular location is the apical cell membrane. The protein resides in the cytoplasmic vesicle membrane. The enzyme catalyses Na(+)(in) = Na(+)(out). With respect to regulation, originally identified and characterized by its inhibition by the diuretic drug amiloride. This is one of the three pore-forming subunits of the heterotrimeric epithelial sodium channel (ENaC), a critical regulator of sodium balance and fluid homeostasis. ENaC operates in epithelial tissues, where it mediates the electrodiffusion of sodium ions from extracellular fluid through the apical membrane of cells, with water following osmotically. It plays a key role in maintaining sodium homeostasis through electrogenic sodium reabsorption in the kidneys. Additionally, ENaC is essential for airway surface liquid homeostasis, which is crucial for proper mucus clearance. In Aquarana catesbeiana (American bullfrog), this protein is Epithelial sodium channel subunit beta.